Consider the following 194-residue polypeptide: Exopolysaccharide II synthesis transcriptional activator ExpG (194 aa).

Residues 49–184 enclose the HTH marR-type domain; sequence YFELARVMER…AFQTLHRLEL (136 aa).

Transcriptional activator of genes for galactoglucan synthesis (exopolysaccharide II or EPS II). In Rhizobium meliloti (strain 1021) (Ensifer meliloti), this protein is Exopolysaccharide II synthesis transcriptional activator ExpG (expG).